A 60-amino-acid chain; its full sequence is UPF0337 protein asr1134 (60 aa).

2 stretches are compositionally biased toward basic and acidic residues: residues 1 to 18 (MSLE…EGKA) and 29 to 60 (PEDK…KKID). The segment at 1–60 (MSLEDRAKATGKNIEGKAQEALGNVTGDPEDKAEGKAKQAESEVRHGVEDVKDNVKKKID) is disordered.

Belongs to the UPF0337 (CsbD) family.

The sequence is that of UPF0337 protein asr1134 from Nostoc sp. (strain PCC 7120 / SAG 25.82 / UTEX 2576).